Here is a 391-residue protein sequence, read N- to C-terminus: tRNA (cytosine(38)-C(5))-methyltransferase (391 aa).

Residues 4-391 form the SAM-dependent MTase C5-type domain; the sequence is LRVLELYSGV…VAKLIKILYE (388 aa). S-adenosyl-L-methionine contacts are provided by residues 13-15, Asp34, 57-58, and Ser76; these read VGG and IE. Cys79 is a catalytic residue. An S-adenosyl-L-methionine-binding site is contributed by Ser376.

Belongs to the class I-like SAM-binding methyltransferase superfamily. C5-methyltransferase family. As to expression, ubiquitous. Higher expression in testis, ovary and thymus and at much lower levels in spleen, prostate, colon, small intestine, and peripheral blood leukocytes.

It localises to the cytoplasm. The catalysed reaction is cytidine(38) in tRNA + S-adenosyl-L-methionine = 5-methylcytidine(38) in tRNA + S-adenosyl-L-homocysteine + H(+). Its function is as follows. Specifically methylates cytosine 38 in the anticodon loop of tRNA(Asp). Has higher activity on tRNA(Asp) modified with queuosine at position 34. This Homo sapiens (Human) protein is tRNA (cytosine(38)-C(5))-methyltransferase (TRDMT1).